Reading from the N-terminus, the 431-residue chain is Nocturnin (431 aa).

The transit peptide at 1–75 (MFHSPRRLCS…SMGTGTSRLY (75 aa)) directs the protein to the mitochondrion. The span at 20 to 31 (LRRLPAPGLRRP) shows a compositional bias: low complexity. Positions 20–41 (LRRLPAPGLRRPLSPPAAVPRP) are disordered. Pro residues predominate over residues 32–41 (LSPPAAVPRP). Residue E195 participates in Mg(2+) binding. Residues E195, 219-221 (KPW), N263, 286-289 (HLKA), and 324-326 (DFN) each bind substrate. Residues 343–353 (NLNSAYKLLSA) form an interaction with PPARG region. Substrate is bound at residue H414.

The protein belongs to the CCR4/nocturin family. As to quaternary structure, interacts with PPARG. Mg(2+) is required as a cofactor. As to expression, adipose tissue. Expression is higher in subcutaneous adipose tissue as compared to visceral adipose tissue.

The protein localises to the cytoplasm. The protein resides in the nucleus. Its subcellular location is the perinuclear region. It localises to the mitochondrion. It catalyses the reaction NADP(+) + H2O = phosphate + NAD(+). It carries out the reaction NADPH + H2O = phosphate + NADH. In terms of biological role, phosphatase which catalyzes the conversion of NADP(+) to NAD(+) and of NADPH to NADH. Shows a small preference for NADPH over NADP(+). Represses translation and promotes degradation of target mRNA molecules. Plays an important role in post-transcriptional regulation of metabolic genes under circadian control. Exerts a rhythmic post-transcriptional control of genes necessary for metabolic functions including nutrient absorption, glucose/insulin sensitivity, lipid metabolism, adipogenesis, inflammation and osteogenesis. Plays an important role in favoring adipogenesis over osteoblastogenesis and acts as a key regulator of the adipogenesis/osteogenesis balance. Promotes adipogenesis by facilitating PPARG nuclear translocation which activates its transcriptional activity. Regulates circadian expression of NOS2 in the liver and negatively regulates the circadian expression of IGF1 in the bone. Critical for proper development of early embryos. The protein is Nocturnin of Homo sapiens (Human).